The following is a 74-amino-acid chain: Large ribosomal subunit protein bL31 (74 aa).

Cys-16, Cys-18, Cys-38, and Cys-41 together coordinate Zn(2+).

The protein belongs to the bacterial ribosomal protein bL31 family. Type A subfamily. In terms of assembly, part of the 50S ribosomal subunit. Zn(2+) serves as cofactor.

Functionally, binds the 23S rRNA. In Salinispora tropica (strain ATCC BAA-916 / DSM 44818 / JCM 13857 / NBRC 105044 / CNB-440), this protein is Large ribosomal subunit protein bL31.